Reading from the N-terminus, the 956-residue chain is Bifunctional glutamine synthetase adenylyltransferase/adenylyl-removing enzyme (956 aa).

The segment at 1 to 450 (MENMSEQALP…YFKETVGGQE (450 aa)) is adenylyl removase. An adenylyl transferase region spans residues 456–956 (EQWTAQLWSL…IYEQVLNNGQ (501 aa)).

This sequence belongs to the GlnE family. Mg(2+) serves as cofactor.

The enzyme catalyses [glutamine synthetase]-O(4)-(5'-adenylyl)-L-tyrosine + phosphate = [glutamine synthetase]-L-tyrosine + ADP. The catalysed reaction is [glutamine synthetase]-L-tyrosine + ATP = [glutamine synthetase]-O(4)-(5'-adenylyl)-L-tyrosine + diphosphate. Its function is as follows. Involved in the regulation of glutamine synthetase GlnA, a key enzyme in the process to assimilate ammonia. When cellular nitrogen levels are high, the C-terminal adenylyl transferase (AT) inactivates GlnA by covalent transfer of an adenylyl group from ATP to specific tyrosine residue of GlnA, thus reducing its activity. Conversely, when nitrogen levels are low, the N-terminal adenylyl removase (AR) activates GlnA by removing the adenylyl group by phosphorolysis, increasing its activity. The regulatory region of GlnE binds the signal transduction protein PII (GlnB) which indicates the nitrogen status of the cell. The sequence is that of Bifunctional glutamine synthetase adenylyltransferase/adenylyl-removing enzyme from Shewanella loihica (strain ATCC BAA-1088 / PV-4).